The sequence spans 395 residues: MPGRSRVALVLLAAAVSCAVAQHAPPWTEDCRKSTYPPSGPTYRGPVPWYTINLDLPPYKRWHELMLDKAPMLKVIVNSLKNMINTFVPSGKIVQVVDEKLPGLLGNFPGPFEEEMKGIAAVTDIPLGEIISFNIFYELFTICTSIVAEDKKGHLIHGRNMDFGVFLGWNINNDTWVITEQLKPLTVNLDFQRNNKTVFKASSFAGYVGMLTGFKPGLFSLSLNERFSINGGYLGILEWILGKKDAMWIGFLTRTVLENSTSYEEAKNLLTKTKILAPAYFILGGNQSGEGCVITRDRKESLDVYELDAKQGRWYVVQTNYDRWKHPFFLDDRRTPAKMCLNRTSQENISFETMYDVLSTKPVLNKLTVYTTLIDVTKGQFETYLRDCPDPCIGW.

The signal sequence occupies residues 1 to 21 (MPGRSRVALVLLAAAVSCAVA). C31 and C340 form a disulfide bridge. Residue C143 is the Nucleophile of the active site. Residues N195, N259, N286, and N342 are each glycosylated (N-linked (GlcNAc...) asparagine). C388 and C392 are oxidised to a cystine.

It belongs to the acid ceramidase family. As to quaternary structure, heterodimer; disulfide-linked. The heterodimer is composed of the disulfide-linked alpha and beta chains produced by autocatalytic cleavage of the precursor. In terms of processing, N-glycosylated. Proteolytically cleaved into two chains alpha and beta that remain associated via a disulfide bond. Cleavage gives rise to a conformation change that activates the enzyme. The same catalytic Cys residue mediates the autoproteolytic cleavage and subsequent hydrolysis of lipid substrates. The beta chain may undergo an additional C-terminal processing.

Its subcellular location is the lysosome. The protein localises to the secreted. It carries out the reaction an N-acylsphing-4-enine + H2O = sphing-4-enine + a fatty acid. The enzyme catalyses N-dodecanoylsphing-4-enine + H2O = dodecanoate + sphing-4-enine. The catalysed reaction is N-tetradecanoylsphing-4-enine + H2O = tetradecanoate + sphing-4-enine. It catalyses the reaction N-hexadecanoylsphing-4-enine + H2O = sphing-4-enine + hexadecanoate. It carries out the reaction N-octadecanoylsphing-4-enine + H2O = sphing-4-enine + octadecanoate. The enzyme catalyses N-dodecanoyl-(4R)-hydroxysphinganine + H2O = (4R)-hydroxysphinganine + dodecanoate. The catalysed reaction is N-(dodecanoyl)-sphinganine + H2O = dodecanoate + sphinganine. It catalyses the reaction N-(acetyl)-sphing-4-enine + H2O = sphing-4-enine + acetate. It carries out the reaction N-(hexanoyl)sphing-4-enine + H2O = hexanoate + sphing-4-enine. The enzyme catalyses N-octanoylsphing-4-enine + H2O = octanoate + sphing-4-enine. The catalysed reaction is N-(9Z-octadecenoyl)-sphing-4-enine + H2O = sphing-4-enine + (9Z)-octadecenoate. It catalyses the reaction N-dodecanoylethanolamine + H2O = dodecanoate + ethanolamine. It functions in the pathway lipid metabolism; sphingolipid metabolism. Its function is as follows. Lysosomal ceramidase that hydrolyzes sphingolipid ceramides into sphingosine and free fatty acids at acidic pH. Ceramides, sphingosine, and its phosphorylated form sphingosine-1-phosphate are bioactive lipids that mediate cellular signaling pathways regulating several biological processes including cell proliferation, apoptosis and differentiation. Has a higher catalytic efficiency towards C12-ceramides versus other ceramides. Also catalyzes the reverse reaction allowing the synthesis of ceramides from fatty acids and sphingosine. For the reverse synthetic reaction, the natural sphingosine D-erythro isomer is more efficiently utilized as a substrate compared to D-erythro-dihydrosphingosine and D-erythro-phytosphingosine, while the fatty acids with chain lengths of 12 or 14 carbons are the most efficiently used. Also has an N-acylethanolamine hydrolase activity. By regulating the levels of ceramides, sphingosine and sphingosine-1-phosphate in the epidermis, mediates the calcium-induced differentiation of epidermal keratinocytes. Also indirectly regulates tumor necrosis factor/TNF-induced apoptosis. By regulating the intracellular balance between ceramides and sphingosine, in adrenocortical cells, probably also acts as a regulator of steroidogenesis. This chain is Acid ceramidase, found in Pan troglodytes (Chimpanzee).